Reading from the N-terminus, the 101-residue chain is NAD(P)H-quinone oxidoreductase subunit 4L, chloroplastic (101 aa).

3 helical membrane passes run 2 to 22 (LLEH…YGLI), 32 to 52 (MCLE…SDFF), and 61 to 81 (IFSI…SAIV).

It belongs to the complex I subunit 4L family. NDH is composed of at least 16 different subunits, 5 of which are encoded in the nucleus.

It is found in the plastid. It localises to the chloroplast thylakoid membrane. The catalysed reaction is a plastoquinone + NADH + (n+1) H(+)(in) = a plastoquinol + NAD(+) + n H(+)(out). The enzyme catalyses a plastoquinone + NADPH + (n+1) H(+)(in) = a plastoquinol + NADP(+) + n H(+)(out). Its function is as follows. NDH shuttles electrons from NAD(P)H:plastoquinone, via FMN and iron-sulfur (Fe-S) centers, to quinones in the photosynthetic chain and possibly in a chloroplast respiratory chain. The immediate electron acceptor for the enzyme in this species is believed to be plastoquinone. Couples the redox reaction to proton translocation, and thus conserves the redox energy in a proton gradient. In Carica papaya (Papaya), this protein is NAD(P)H-quinone oxidoreductase subunit 4L, chloroplastic.